Here is a 162-residue protein sequence, read N- to C-terminus: Interleukin-15 (162 aa).

The first 29 residues, 1-29 (MKILKPYMRNTSISCYLCFLLNSHFLTEA), serve as a signal peptide directing secretion. Residues 30-48 (GIHVFILGCVSVGLPKTEA) constitute a propeptide that is removed on maturation. Disulfide bonds link C83-C133 and C90-C136. N104, N108, and N119 each carry an N-linked (GlcNAc...) asparagine glycan.

Belongs to the IL-15/IL-21 family.

Its subcellular location is the secreted. Functionally, cytokine that plays a major role in the development of inflammatory and protective immune responses to microbial invaders and parasites by modulating immune cells of both the innate and adaptive immune systems. Stimulates the proliferation and activation of natural killer cells, T-cells and B-cells and promotes the secretion of several cytokines. In monocytes, induces the production of IL8 and monocyte chemotactic protein 1/CCL2, two chemokines that attract neutrophils and monocytes respectively to sites of infection. Unlike most cytokines, which are secreted in soluble form, IL15 is expressed in association with its high affinity IL15RA on the surface of IL15-producing cells and delivers signals to target cells that express IL2RB and IL2RG receptor subunits. Binding to its receptor triggers the phosphorylation of JAK1 and JAK3 and the recruitment and subsequent phosphorylation of signal transducer and activator of transcription-3/STAT3 and STAT5. In mast cells, induces the rapid tyrosine phosphorylation of STAT6 and thereby controls mast cell survival and release of cytokines such as IL4. The protein is Interleukin-15 (Il15) of Mus musculus (Mouse).